A 264-amino-acid polypeptide reads, in one-letter code: Thymidylate synthase (264 aa).

Residue R21 coordinates dUMP. H51 contributes to the (6R)-5,10-methylene-5,6,7,8-tetrahydrofolate binding site. 126–127 (RR) lines the dUMP pocket. Catalysis depends on C146, which acts as the Nucleophile. Residues 166–169 (RSAD), N177, and 207–209 (HLY) contribute to the dUMP site. D169 contacts (6R)-5,10-methylene-5,6,7,8-tetrahydrofolate. Residue A263 coordinates (6R)-5,10-methylene-5,6,7,8-tetrahydrofolate.

The protein belongs to the thymidylate synthase family. Bacterial-type ThyA subfamily. Homodimer.

It is found in the cytoplasm. It catalyses the reaction dUMP + (6R)-5,10-methylene-5,6,7,8-tetrahydrofolate = 7,8-dihydrofolate + dTMP. It functions in the pathway pyrimidine metabolism; dTTP biosynthesis. In terms of biological role, catalyzes the reductive methylation of 2'-deoxyuridine-5'-monophosphate (dUMP) to 2'-deoxythymidine-5'-monophosphate (dTMP) while utilizing 5,10-methylenetetrahydrofolate (mTHF) as the methyl donor and reductant in the reaction, yielding dihydrofolate (DHF) as a by-product. This enzymatic reaction provides an intracellular de novo source of dTMP, an essential precursor for DNA biosynthesis. The sequence is that of Thymidylate synthase from Polynucleobacter asymbioticus (strain DSM 18221 / CIP 109841 / QLW-P1DMWA-1) (Polynucleobacter necessarius subsp. asymbioticus).